The following is a 370-amino-acid chain: WAT1-related protein At1g44800 (370 aa).

The next 10 helical transmembrane spans lie at 11 to 31, 41 to 61, 67 to 87, 102 to 122, 142 to 162, 182 to 202, 216 to 236, 252 to 272, 278 to 298, and 303 to 323; these read PILA…ITMV, VLAT…ALMF, PKMT…EPLM, SYTS…ALIF, VITV…IEIV, WVLG…FFIL, LVTL…LIMV, AAVY…SIVI, VFTT…GALV, and IHLG…SVVW. 2 consecutive EamA domains span residues 23 to 143 and 195 to 322; these read AGMY…GTVI and TWAA…YSVV.

This sequence belongs to the drug/metabolite transporter (DMT) superfamily. Plant drug/metabolite exporter (P-DME) (TC 2.A.7.4) family.

Its subcellular location is the membrane. The polypeptide is WAT1-related protein At1g44800 (Arabidopsis thaliana (Mouse-ear cress)).